The primary structure comprises 414 residues: Serine hydroxymethyltransferase (414 aa).

Residues Leu121 and 125 to 127 (GHL) each bind (6S)-5,6,7,8-tetrahydrofolate. An N6-(pyridoxal phosphate)lysine modification is found at Lys229.

This sequence belongs to the SHMT family. In terms of assembly, homodimer. The cofactor is pyridoxal 5'-phosphate.

The protein resides in the cytoplasm. It carries out the reaction (6R)-5,10-methylene-5,6,7,8-tetrahydrofolate + glycine + H2O = (6S)-5,6,7,8-tetrahydrofolate + L-serine. The protein operates within one-carbon metabolism; tetrahydrofolate interconversion. Its pathway is amino-acid biosynthesis; glycine biosynthesis; glycine from L-serine: step 1/1. Functionally, catalyzes the reversible interconversion of serine and glycine with tetrahydrofolate (THF) serving as the one-carbon carrier. This reaction serves as the major source of one-carbon groups required for the biosynthesis of purines, thymidylate, methionine, and other important biomolecules. Also exhibits THF-independent aldolase activity toward beta-hydroxyamino acids, producing glycine and aldehydes, via a retro-aldol mechanism. The polypeptide is Serine hydroxymethyltransferase (Acidovorax ebreus (strain TPSY) (Diaphorobacter sp. (strain TPSY))).